A 354-amino-acid polypeptide reads, in one-letter code: Heat-inducible transcription repressor HrcA (354 aa).

The protein belongs to the HrcA family.

Negative regulator of class I heat shock genes (grpE-dnaK-dnaJ and groELS operons). Prevents heat-shock induction of these operons. This is Heat-inducible transcription repressor HrcA from Herpetosiphon aurantiacus (strain ATCC 23779 / DSM 785 / 114-95).